A 126-amino-acid polypeptide reads, in one-letter code: Phosphoribosyl-ATP pyrophosphatase (126 aa).

It belongs to the PRA-PH family.

The protein localises to the cytoplasm. The catalysed reaction is 1-(5-phospho-beta-D-ribosyl)-ATP + H2O = 1-(5-phospho-beta-D-ribosyl)-5'-AMP + diphosphate + H(+). It participates in amino-acid biosynthesis; L-histidine biosynthesis; L-histidine from 5-phospho-alpha-D-ribose 1-diphosphate: step 2/9. This Variovorax paradoxus (strain S110) protein is Phosphoribosyl-ATP pyrophosphatase.